The sequence spans 73 residues: Conotoxin reg3a (73 aa).

A signal peptide spans 1-20; the sequence is MMSKLRVLLTICLLLFPLSA. A propeptide spanning residues 21–55 is cleaved from the precursor; the sequence is LPLDGDQPADQPAKRMWNGKLAARKPRFDKYDLVR. 4-hydroxyproline is present on residues P59, P60, P65, and P70. The residue at position 72 (C72) is a Cysteine amide.

Contains 3 disulfide bonds. As to expression, expressed by the venom duct.

It is found in the secreted. This is Conotoxin reg3a from Conus regius (Crown cone).